Here is a 341-residue protein sequence, read N- to C-terminus: UDP-3-O-acylglucosamine N-acyltransferase (341 aa).

H241 serves as the catalytic Proton acceptor.

The protein belongs to the transferase hexapeptide repeat family. LpxD subfamily. Homotrimer.

The catalysed reaction is a UDP-3-O-[(3R)-3-hydroxyacyl]-alpha-D-glucosamine + a (3R)-hydroxyacyl-[ACP] = a UDP-2-N,3-O-bis[(3R)-3-hydroxyacyl]-alpha-D-glucosamine + holo-[ACP] + H(+). The protein operates within bacterial outer membrane biogenesis; LPS lipid A biosynthesis. In terms of biological role, catalyzes the N-acylation of UDP-3-O-acylglucosamine using 3-hydroxyacyl-ACP as the acyl donor. Is involved in the biosynthesis of lipid A, a phosphorylated glycolipid that anchors the lipopolysaccharide to the outer membrane of the cell. This Christiangramia forsetii (strain DSM 17595 / CGMCC 1.15422 / KT0803) (Gramella forsetii) protein is UDP-3-O-acylglucosamine N-acyltransferase.